The chain runs to 1050 residues: NAD-specific glutamate dehydrogenase (1050 aa).

Residues 1 to 39 (MDSPSAPVPAHKLVDRLKDQTPRHPSPQPTHVSYPKVNG) form a disordered region. A compositionally biased stretch (basic and acidic residues) spans 12–22 (KLVDRLKDQTP). Lys594 is an active-site residue.

It belongs to the Glu/Leu/Phe/Val dehydrogenases family. Homotetramer.

The catalysed reaction is L-glutamate + NAD(+) + H2O = 2-oxoglutarate + NH4(+) + NADH + H(+). This Neurospora crassa (strain ATCC 24698 / 74-OR23-1A / CBS 708.71 / DSM 1257 / FGSC 987) protein is NAD-specific glutamate dehydrogenase (gdh-1).